Consider the following 164-residue polypeptide: Transcription antitermination protein NusB (164 aa).

Belongs to the NusB family.

In terms of biological role, involved in transcription antitermination. Required for transcription of ribosomal RNA (rRNA) genes. Binds specifically to the boxA antiterminator sequence of the ribosomal RNA (rrn) operons. The sequence is that of Transcription antitermination protein NusB from Chlorobaculum parvum (strain DSM 263 / NCIMB 8327) (Chlorobium vibrioforme subsp. thiosulfatophilum).